The following is a 295-amino-acid chain: Small ribosomal subunit protein uS2 (295 aa).

The protein belongs to the universal ribosomal protein uS2 family.

This chain is Small ribosomal subunit protein uS2, found in Rickettsia typhi (strain ATCC VR-144 / Wilmington).